The chain runs to 336 residues: Flavonol synthase/flavanone 3-hydroxylase (336 aa).

Positions 99–118 (EKESVAKPEDSKDIEGYGTK) are disordered. A Fe2OG dioxygenase domain is found at 196–296 (MAEYMMKINY…RMSWPVFLEP (101 aa)). Residue 204–206 (NYY) participates in 2-oxoglutarate binding. Fe cation contacts are provided by H221, D223, and H277. 287 to 289 (RMS) is a binding site for 2-oxoglutarate.

The protein belongs to the iron/ascorbate-dependent oxidoreductase family. L-ascorbate is required as a cofactor. Fe(2+) serves as cofactor. In terms of tissue distribution, expressed in young seedlings (at protein level). Expressed in roots, emerging leaves, shoot-root transition zone, trichomes, flowers and siliques. In cotyledons, expressed mostly on the adaxial side and only in guard cells on the abaxial side.

The protein localises to the cytoplasm. Its subcellular location is the nucleus. The catalysed reaction is a (2R,3R)-dihydroflavonol + 2-oxoglutarate + O2 = a flavonol + succinate + CO2 + H2O. The enzyme catalyses a (2S)-flavan-4-one + 2-oxoglutarate + O2 = a (2R,3R)-dihydroflavonol + succinate + CO2. Its pathway is secondary metabolite biosynthesis; flavonoid biosynthesis. In terms of biological role, catalyzes the formation of flavonols from dihydroflavonols. It can act on dihydrokaempferol to produce kaempferol, on dihydroquercetin to produce quercitin and on dihydromyricetin to produce myricetin. In vitro catalyzes the oxidation of both enantiomers of naringenin to give both cis- and trans-dihydrokaempferol. In Arabidopsis thaliana (Mouse-ear cress), this protein is Flavonol synthase/flavanone 3-hydroxylase (FLS1).